The following is a 394-amino-acid chain: Phosphoglycerate kinase (394 aa).

Residues 21–23 (DFN), R36, 59–62 (HLGR), R118, and R151 each bind substrate. S183 carries the post-translational modification Phosphoserine. ATP is bound by residues K201 and G292. Residue T299 is modified to Phosphothreonine. Residues E323 and 350-353 (GGDS) contribute to the ATP site.

This sequence belongs to the phosphoglycerate kinase family. Monomer.

The protein resides in the cytoplasm. It catalyses the reaction (2R)-3-phosphoglycerate + ATP = (2R)-3-phospho-glyceroyl phosphate + ADP. It participates in carbohydrate degradation; glycolysis; pyruvate from D-glyceraldehyde 3-phosphate: step 2/5. The sequence is that of Phosphoglycerate kinase from Bacillus thuringiensis subsp. konkukian (strain 97-27).